Here is a 357-residue protein sequence, read N- to C-terminus: Fructose-bisphosphate aldolase, cytoplasmic isozyme 1 (357 aa).

Residues arginine 52 and lysine 142 each coordinate substrate. The active-site Proton acceptor is the glutamate 183. The Schiff-base intermediate with dihydroxyacetone-P role is filled by lysine 225.

Belongs to the class I fructose-bisphosphate aldolase family.

It localises to the cytoplasm. The enzyme catalyses beta-D-fructose 1,6-bisphosphate = D-glyceraldehyde 3-phosphate + dihydroxyacetone phosphate. It functions in the pathway carbohydrate degradation; glycolysis; D-glyceraldehyde 3-phosphate and glycerone phosphate from D-glucose: step 4/4. This chain is Fructose-bisphosphate aldolase, cytoplasmic isozyme 1, found in Pisum sativum (Garden pea).